The primary structure comprises 116 residues: Small ribosomal subunit protein bS16 (116 aa).

Residues 88–116 (RNNPKAAVPGKRMAELAKKKAERAAASAE) are disordered. Residues 99 to 110 (RMAELAKKKAER) are compositionally biased toward basic and acidic residues.

The protein belongs to the bacterial ribosomal protein bS16 family.

The chain is Small ribosomal subunit protein bS16 from Cereibacter sphaeroides (strain ATCC 17025 / ATH 2.4.3) (Rhodobacter sphaeroides).